A 353-amino-acid polypeptide reads, in one-letter code: Photosystem II protein D1 (353 aa).

An N-acetylthreonine modification is found at Thr-2. Thr-2 carries the post-translational modification Phosphothreonine. Helical transmembrane passes span 29 to 46, 118 to 133, and 142 to 156; these read YIGW…TATS, HFLL…EWEL, and WIAV…AATA. His-118 serves as a coordination point for chlorophyll a. Tyr-126 provides a ligand contact to pheophytin a. 2 residues coordinate [CaMn4O5] cluster: Asp-170 and Glu-189. The helical transmembrane segment at 197–218 threads the bilayer; it reads FHMLGVAGVFGGSLFSAMHGSL. His-198 contacts chlorophyll a. Residues His-215 and 264–265 contribute to the a quinone site; that span reads SF. Position 215 (His-215) interacts with Fe cation. His-272 is a Fe cation binding site. A helical membrane pass occupies residues 274–288; that stretch reads FLAAWPVAGIWFTAL. 4 residues coordinate [CaMn4O5] cluster: His-332, Glu-333, Asp-342, and Ala-344. Positions 345 to 353 are excised as a propeptide; sequence AVESISIGG.

The protein belongs to the reaction center PufL/M/PsbA/D family. As to quaternary structure, PSII is composed of 1 copy each of membrane proteins PsbA, PsbB, PsbC, PsbD, PsbE, PsbF, PsbH, PsbI, PsbJ, PsbK, PsbL, PsbM, PsbT, PsbX, PsbY, PsbZ, Psb30/Ycf12, at least 3 peripheral proteins of the oxygen-evolving complex and a large number of cofactors. It forms dimeric complexes. The cofactor is The D1/D2 heterodimer binds P680, chlorophylls that are the primary electron donor of PSII, and subsequent electron acceptors. It shares a non-heme iron and each subunit binds pheophytin, quinone, additional chlorophylls, carotenoids and lipids. D1 provides most of the ligands for the Mn4-Ca-O5 cluster of the oxygen-evolving complex (OEC). There is also a Cl(-1) ion associated with D1 and D2, which is required for oxygen evolution. The PSII complex binds additional chlorophylls, carotenoids and specific lipids.. Tyr-161 forms a radical intermediate that is referred to as redox-active TyrZ, YZ or Y-Z. In terms of processing, C-terminally processed by CTPA; processing is essential to allow assembly of the oxygen-evolving complex and thus photosynthetic growth.

The protein localises to the plastid. Its subcellular location is the chloroplast thylakoid membrane. It catalyses the reaction 2 a plastoquinone + 4 hnu + 2 H2O = 2 a plastoquinol + O2. In terms of biological role, photosystem II (PSII) is a light-driven water:plastoquinone oxidoreductase that uses light energy to abstract electrons from H(2)O, generating O(2) and a proton gradient subsequently used for ATP formation. It consists of a core antenna complex that captures photons, and an electron transfer chain that converts photonic excitation into a charge separation. The D1/D2 (PsbA/PsbD) reaction center heterodimer binds P680, the primary electron donor of PSII as well as several subsequent electron acceptors. The sequence is that of Photosystem II protein D1 from Pinus contorta (Shore pine).